Consider the following 869-residue polypeptide: Structure-specific endonuclease subunit SLX4 (869 aa).

Positions 40–59 (SPLSLPSPTSLLDFLSTSTS) are enriched in low complexity. 7 disordered regions span residues 40-79 (SPLS…EVLD), 92-116 (NRVV…ESPG), 165-199 (KANQ…INDL), 293-323 (GLSD…NPPK), 351-388 (TLLS…KKNE), 418-437 (ANGH…HISN), and 630-774 (KTSN…ASET). Over residues 63-79 (ARSDTDGDKTQGKEVLD) the composition is skewed to basic and acidic residues. Polar residues-rich tracts occupy residues 165 to 174 (KANQTVSLQP) and 294 to 311 (LSDS…SATS). Over residues 312–322 (KPRRVKAKNPP) the composition is skewed to basic residues. 2 stretches are compositionally biased toward polar residues: residues 647–657 (VDESTQGQSLG) and 664–673 (SIPQTATTQV). A compositionally biased stretch (low complexity) spans 688–700 (VPVPSRRSTSTSK). A compositionally biased stretch (polar residues) spans 765–774 (IPSTGTASET).

The protein belongs to the SLX4 family. In terms of assembly, forms a heterodimer with SLX1. In terms of processing, phosphorylated in response to DNA damage.

It localises to the nucleus. Regulatory subunit of the SLX1-SLX4 structure-specific endonuclease that resolves DNA secondary structures generated during DNA repair and recombination. Has endonuclease activity towards branched DNA substrates, introducing single-strand cuts in duplex DNA close to junctions with ss-DNA. This chain is Structure-specific endonuclease subunit SLX4, found in Paracoccidioides brasiliensis (strain Pb18).